We begin with the raw amino-acid sequence, 3146 residues long: Bassianolide nonribosomal cyclodepsipeptide synthetase (3146 aa).

Positions 1–12 (MEPPNNANTGQL) are enriched in polar residues. The segment at 1 to 23 (MEPPNNANTGQLGPTLPNGTVDL) is disordered. The interval 69–454 (HVVYEIPEDV…INKLQSTDGS (386 aa)) is condensation 1. An adenylation 1 region spans residues 495 to 887 (GDTPNKPAVC…GRMDSQVKIR (393 aa)). The 77-residue stretch at 1015–1091 (PDASAGVTKL…SLQAAIGGSS (77 aa)) folds into the Carrier 1 domain. An O-(pantetheine 4'-phosphoryl)serine modification is found at S1052. A condensation 2 region spans residues 1109–1538 (SYSQGRLWFL…QTLISVVPLT (430 aa)). An adenylation 2 region spans residues 1567–1973 (FRTQVASYPD…GRMDFQFKIR (407 aa)). The segment at 2041–2181 (TYTELDTVSS…FPTRDYLERV (141 aa)) is S-adenosyl-L-methionine-dependent N-methyltransferase (MT). Carrier domains follow at residues 2514–2588 (FPLS…RQQL) and 2614–2688 (APTT…EVSQ). O-(pantetheine 4'-phosphoryl)serine occurs at positions 2548 and 2648. Positions 2734 to 3138 (QDVYLATHLQ…THLMEQVCNT (405 aa)) are condensation 3.

It belongs to the NRP synthetase family.

It catalyses the reaction 4 (R)-2-hydroxy-3-methylbutanoate + 4 L-leucine + 4 S-adenosyl-L-methionine + 8 ATP = bassianolide + 8 AMP + 4 S-adenosyl-L-homocysteine + 8 diphosphate + 8 H(+). Its function is as follows. Bassianolide nonribosomal synthetase that mediates the biosynthesis of bassianolide (BSL), a non-ribosomal cyclodepsipeptide that shows insecticidal and cancer cell antiproliferative activity. BSLS first catalyzes the iterative synthesis of an enzyme-bound dipeptidol monomer intermediate from D-2-hydroxyisovalerate and L-leucine before performing the condensation and cyclization of 4 dipeptidol monomers to yield the cyclic tetrameric ester bassianolide. The N-methyltransferase MT domain is responsible for the methylation of the leucine residues of bassianolide. BSLS is flexible with both the amino acid and hydroxyl acid precursors, and produces bassianolide as the major product (containing N-methyl-L-Leu), together with small amounts of beauvericin and its analogs beauvericins A-C (containing N-methyl-L-Phe). This chain is Bassianolide nonribosomal cyclodepsipeptide synthetase, found in Beauveria bassiana (White muscardine disease fungus).